A 315-amino-acid polypeptide reads, in one-letter code: Protein-methionine-sulfoxide reductase catalytic subunit MsrP (315 aa).

A signal peptide (tat-type signal) is located at residues 1-45 (MPSYRPPKIASSEITPRQVYLRRREFLGAATLGAMALYGAGKASA). Residues asparagine 71, 74–75 (YE), cysteine 129, threonine 164, asparagine 214, arginine 219, and 230–232 (GIK) contribute to the Mo-molybdopterin site.

Belongs to the MsrP family. As to quaternary structure, heterodimer of a catalytic subunit (MsrP) and a heme-binding subunit (MsrQ). It depends on Mo-molybdopterin as a cofactor. Post-translationally, predicted to be exported by the Tat system. The position of the signal peptide cleavage has not been experimentally proven.

It localises to the periplasm. The catalysed reaction is L-methionyl-[protein] + a quinone + H2O = L-methionyl-(S)-S-oxide-[protein] + a quinol. It catalyses the reaction L-methionyl-[protein] + a quinone + H2O = L-methionyl-(R)-S-oxide-[protein] + a quinol. Its function is as follows. Part of the MsrPQ system that repairs oxidized periplasmic proteins containing methionine sulfoxide residues (Met-O), using respiratory chain electrons. Thus protects these proteins from oxidative-stress damage caused by reactive species of oxygen and chlorine generated by the host defense mechanisms. MsrPQ is essential for the maintenance of envelope integrity under bleach stress, rescuing a wide series of structurally unrelated periplasmic proteins from methionine oxidation. The catalytic subunit MsrP is non-stereospecific, being able to reduce both (R-) and (S-) diastereoisomers of methionine sulfoxide. In Rhizobium etli (strain ATCC 51251 / DSM 11541 / JCM 21823 / NBRC 15573 / CFN 42), this protein is Protein-methionine-sulfoxide reductase catalytic subunit MsrP.